Consider the following 534-residue polypeptide: Ethanolamine kinase (534 aa).

Ser23 is modified (phosphoserine).

It belongs to the choline/ethanolamine kinase family.

The protein resides in the cytoplasm. It carries out the reaction ethanolamine + ATP = phosphoethanolamine + ADP + H(+). The catalysed reaction is choline + ATP = phosphocholine + ADP + H(+). The protein operates within phospholipid metabolism; phosphatidylethanolamine biosynthesis; phosphatidylethanolamine from ethanolamine: step 1/3. Functionally, catalyzes the committed step of phosphatidylethanolamine synthesis via the CDP-ethanolamine branch of the Kennedy pathway. Also exhibits choline kinase activity, thus contributing to phosphatidylcholine synthesis via the CDP-choline pathway, but its preferred substrate is ethanolamine. This is Ethanolamine kinase (EKI1) from Saccharomyces cerevisiae (strain ATCC 204508 / S288c) (Baker's yeast).